Consider the following 563-residue polypeptide: Putative cysteine ligase BshC (563 aa).

The protein belongs to the BshC family.

This chain is Putative cysteine ligase BshC, found in Chlorobium phaeobacteroides (strain BS1).